The chain runs to 805 residues: Leucine--tRNA ligase (805 aa).

The 'HIGH' region signature appears at 40–51 (PYPSGAGLHVGH). A 'KMSKS' region motif is present at residues 576 to 580 (KMSKS). Residue K579 participates in ATP binding.

This sequence belongs to the class-I aminoacyl-tRNA synthetase family.

Its subcellular location is the cytoplasm. The catalysed reaction is tRNA(Leu) + L-leucine + ATP = L-leucyl-tRNA(Leu) + AMP + diphosphate. The polypeptide is Leucine--tRNA ligase (Geobacillus kaustophilus (strain HTA426)).